The primary structure comprises 343 residues: MRN complex-interacting protein (343 aa).

A disordered region spans residues 75–104 (EETVSASEEENVGHQQAGNVKQQEKSQPSE). Over residues 87-104 (GHQQAGNVKQQEKSQPSE) the composition is skewed to polar residues. Ser-100 and Ser-115 each carry phosphoserine. Disordered stretches follow at residues 128–178 (SKQP…WGPQ), 193–212 (SPCL…RGPG), and 230–324 (AQFV…AQNP). Positions 148-151 (RKRK) match the Nuclear localization signal (NLS) motif. Residues 193–202 (SPCLQENSAD) are compositionally biased toward polar residues. A necessary for the association with the MRN complex region spans residues 213-237 (KELWSPIQQVTATSSKWAQFVLPPR). Positions 240 to 255 (SHVDSEQPRSLQRDPR) are enriched in basic and acidic residues.

The protein belongs to the MRNIP family. Associates with the MRE11-RAD50-NBN (MRN) damage-sensing complex; this association is constitutive. Interacts with MRE11. Interacts with NBN. Interacts with RAD50. In terms of processing, phosphorylated; phosphorylation is constitutive and occurs in the absence of any DNA-damaging stimulus. Phosphorylation on Ser-115 is necessary for its nuclear retention.

The protein localises to the nucleus. It is found in the nucleoplasm. Its function is as follows. Plays a role in the cellular response to DNA damage and the maintenance of genome stability through its association with the MRN damage-sensing complex. Promotes chromatin loading and activity of the MRN complex to facilitate subsequent ATM-mediated DNA damage response signaling and DNA repair. The polypeptide is MRN complex-interacting protein (Homo sapiens (Human)).